A 404-amino-acid polypeptide reads, in one-letter code: Glucose-1-phosphate adenylyltransferase (404 aa).

Alpha-D-glucose 1-phosphate contacts are provided by residues Tyr99, Gly164, 179–180, and Ser197; that span reads EK.

This sequence belongs to the bacterial/plant glucose-1-phosphate adenylyltransferase family. Homotetramer.

It catalyses the reaction alpha-D-glucose 1-phosphate + ATP + H(+) = ADP-alpha-D-glucose + diphosphate. The protein operates within glycan biosynthesis; glycogen biosynthesis. In terms of biological role, involved in the biosynthesis of ADP-glucose, a building block required for the elongation reactions to produce glycogen. Catalyzes the reaction between ATP and alpha-D-glucose 1-phosphate (G1P) to produce pyrophosphate and ADP-Glc. The polypeptide is Glucose-1-phosphate adenylyltransferase (Rhodococcus jostii (strain RHA1)).